A 302-amino-acid polypeptide reads, in one-letter code: Orotidine 5'-phosphate decarboxylase (302 aa).

Lys105 (proton donor) is an active-site residue.

It belongs to the OMP decarboxylase family. Type 2 subfamily.

The enzyme catalyses orotidine 5'-phosphate + H(+) = UMP + CO2. Its pathway is pyrimidine metabolism; UMP biosynthesis via de novo pathway; UMP from orotate: step 2/2. The sequence is that of Orotidine 5'-phosphate decarboxylase from Rhodopirellula baltica (strain DSM 10527 / NCIMB 13988 / SH1).